We begin with the raw amino-acid sequence, 872 residues long: Valine--tRNA ligase (872 aa).

The short motif at 45 to 55 is the 'HIGH' region element; that stretch reads PYPTGNLHIGN. A 'KMSKS' region motif is present at residues 524–528; the sequence is KMSKS. Residue Lys-527 participates in ATP binding.

It belongs to the class-I aminoacyl-tRNA synthetase family. ValS type 2 subfamily.

The protein resides in the cytoplasm. It carries out the reaction tRNA(Val) + L-valine + ATP = L-valyl-tRNA(Val) + AMP + diphosphate. Its function is as follows. Catalyzes the attachment of valine to tRNA(Val). As ValRS can inadvertently accommodate and process structurally similar amino acids such as threonine, to avoid such errors, it has a 'posttransfer' editing activity that hydrolyzes mischarged Thr-tRNA(Val) in a tRNA-dependent manner. This chain is Valine--tRNA ligase, found in Natronomonas pharaonis (strain ATCC 35678 / DSM 2160 / CIP 103997 / JCM 8858 / NBRC 14720 / NCIMB 2260 / Gabara) (Halobacterium pharaonis).